A 367-amino-acid polypeptide reads, in one-letter code: Alginate lyase (367 aa).

Positions 1-27 (MKTSHLIRIALPGALAAALLASQVSQA) are cleaved as a signal peptide. Residues 65–66 (SK), 138–139 (HT), and Y256 each bind substrate.

Belongs to the polysaccharide lyase 5 family.

It is found in the periplasm. It catalyses the reaction Eliminative cleavage of alginate to give oligosaccharides with 4-deoxy-alpha-L-erythro-hex-4-enuronosyl groups at their non-reducing ends and beta-D-mannuronate at their reducing end.. Its function is as follows. Catalyzes the depolymerization of alginate by cleaving the beta-1,4 glycosidic bond between two adjacent sugar residues via a beta-elimination mechanism. May serve to degrade mislocalized alginate that is trapped in the periplasmic space. Acts preferentially on non-acetylated alginate or its precursor mannuronan. Is able to catalyze cleavage adjacent to either mannuronate or guluronate residues in alginate. Exhaustive digestion of alginate by AlgL generates dimeric and trimeric products. In addition to its enzymatic function, AlgL appears to be required for alginate export, maybe as part of a multi-protein alginate-secretion complex. The chain is Alginate lyase from Pseudomonas aeruginosa (strain ATCC 15692 / DSM 22644 / CIP 104116 / JCM 14847 / LMG 12228 / 1C / PRS 101 / PAO1).